A 418-amino-acid polypeptide reads, in one-letter code: Protein FAM53A (418 aa).

Disordered regions lie at residues 198-236 and 248-269; these read TSPVPRPSSASSGFVDSSEGSTSSSTRWNSGGPCDFNPR and ETGNLLPSANSTPTSTPELSRR. The segment covering 205–229 has biased composition (low complexity); sequence SSASSGFVDSSEGSTSSSTRWNSGG. A compositionally biased stretch (polar residues) spans 248–265; it reads ETGNLLPSANSTPTSTPE. Residues 285–293 carry the Nuclear localization signal motif; sequence KKSRLKRRR.

Belongs to the FAM53 family.

It is found in the nucleus. Its function is as follows. May play an important role in neural development; the dorsomedial roof of the third ventricle. In Gallus gallus (Chicken), this protein is Protein FAM53A.